A 736-amino-acid chain; its full sequence is MKEAKIENIDFGSALSERYLAYALSTIMSRSLPDVRDGLKPVHRRLLYAMLQLRLEPNSGYKKCARVVGDVIGKYHPHGDVAVYDTLVRLAQHFSLRYPLIDGQGNFGSIDGDNAAAMRYTESRMTEICTLLMEDIDKDTVDFRSTYDDSDLEPVIMPASFPNLLANGSEGIAVGMATNIPPHNLHELCDALMHLIDHPKAEISDIMNFIKGPDFPTGGIIIDKSDVITSAYMTGRGSFRVRARWEKEELNYGVYQIVVTEIPYQVQKSKLIEQIAILLKDKKIPLVSNIRDESTDIIRLVIEPRDRSCDPQIVMESLFKLTNLESRIQLNMNVIGSNNVPKVMNILEVLQEFLSHRQNIITRRSTYLLNKIKHRLEILEGLRIAYLNLDEIIKIIREEDEPKAIMMQRFQLTEIQVEAILNTRLRSLRKLEEQEIITEHSNLQKQQAILEEILNNPKELWKVVKKEIKAVQAKFGLNTTIGARRTSFEQVTLTNQVVDITAFITKEPITIICSKMGWVRSLKGHNNDLSSIKYKEGDAEKFILEAYTTDKILIISSEGRFFTLLADNISKGKGTGESIKLLVDIGNNDITEILVYKPDHLLLLASSIGKGFVVNSNEVMAQTKSGKQIMNVPDGHTCIACLPVNGDSVACIGESRKLLVFNIDEIPEMKKGQGVTLQKFKNAKLLDIKIFNREDGLSWNSGGKVKLEKNIIAFLGKRGSTGKLPPMGFPKNNRFS.

The Topo IIA-type catalytic domain occupies 32–496 (LPDVRDGLKP…SFEQVTLTNQ (465 aa)). Residue Y120 is the O-(5'-phospho-DNA)-tyrosine intermediate of the active site.

Belongs to the type II topoisomerase GyrA/ParC subunit family. ParC type 1 subfamily. Heterotetramer composed of ParC and ParE.

The protein localises to the cell membrane. The enzyme catalyses ATP-dependent breakage, passage and rejoining of double-stranded DNA.. Its function is as follows. Topoisomerase IV is essential for chromosome segregation. It relaxes supercoiled DNA. Performs the decatenation events required during the replication of a circular DNA molecule. This Rickettsia bellii (strain RML369-C) protein is DNA topoisomerase 4 subunit A.